A 69-amino-acid chain; its full sequence is uncharacterized protein (69 aa).

This is an uncharacterized protein from Bacillus subtilis (strain 168).